A 157-amino-acid chain; its full sequence is MNLTHLDEKNHPKMVDVSQKNITQREACASGKIYMSKEAFEAIITNTAKKGPVLQTAITAAIMGAKQTSNLIPMCHPLMISKVQTHIEENKEECSFKLFVTVKCEGKTGVEMESLTAVSIGLLTIYDMIKAIDKSMQITDIVLESKEGGKSGKYLRS.

Substrate-binding positions include 74 to 76 (MCH) and 112 to 113 (ME). Asp-127 is a catalytic residue.

This sequence belongs to the MoaC family. Homohexamer; trimer of dimers.

The catalysed reaction is (8S)-3',8-cyclo-7,8-dihydroguanosine 5'-triphosphate = cyclic pyranopterin phosphate + diphosphate. It participates in cofactor biosynthesis; molybdopterin biosynthesis. Catalyzes the conversion of (8S)-3',8-cyclo-7,8-dihydroguanosine 5'-triphosphate to cyclic pyranopterin monophosphate (cPMP). The chain is Cyclic pyranopterin monophosphate synthase from Campylobacter lari (strain RM2100 / D67 / ATCC BAA-1060).